We begin with the raw amino-acid sequence, 189 residues long: Molybdopterin synthase catalytic subunit (189 aa).

A Phosphoserine modification is found at Ser20. Substrate contacts are provided by residues 143 to 144 (HR), Lys159, and 166 to 168 (KKE).

This sequence belongs to the MoaE family. MOCS2B subfamily. As to quaternary structure, heterotetramer; composed of 2 small (MOCS2A) and 2 large (MOCS2B) subunits.

The protein localises to the cytoplasm. It is found in the cytosol. The catalysed reaction is 2 [molybdopterin-synthase sulfur-carrier protein]-C-terminal-Gly-aminoethanethioate + cyclic pyranopterin phosphate + H2O = molybdopterin + 2 [molybdopterin-synthase sulfur-carrier protein]-C-terminal Gly-Gly + 2 H(+). Its pathway is cofactor biosynthesis; molybdopterin biosynthesis. Catalytic subunit of the molybdopterin synthase complex, a complex that catalyzes the conversion of precursor Z into molybdopterin. Acts by mediating the incorporation of 2 sulfur atoms from thiocarboxylated MOCS2A into precursor Z to generate a dithiolene group. This Bos taurus (Bovine) protein is Molybdopterin synthase catalytic subunit.